Consider the following 365-residue polypeptide: Mitochondrial protein C2orf69 homolog (365 aa).

A mitochondrion-targeting transit peptide spans 1–24; the sequence is MLGSRRLRSPALVLLLLRPLLASG. A disordered region spans residues 28-64; sequence SRLQTRAMNPGGGERGSPEDSHRLQRSTVPGSDPQRS. Positions 53–64 are enriched in polar residues; it reads RSTVPGSDPQRS.

The protein belongs to the C2orf69 family.

The protein resides in the mitochondrion matrix. Functionally, may play a role in the respiratory chain. The polypeptide is Mitochondrial protein C2orf69 homolog (Mus musculus (Mouse)).